The following is a 245-amino-acid chain: Lactate utilization protein A (245 aa).

Belongs to the LutA/YkgE family.

In terms of biological role, is involved in L-lactate degradation and allows cells to grow with lactate as the sole carbon source. The chain is Lactate utilization protein A from Macrococcus caseolyticus (strain JCSC5402) (Macrococcoides caseolyticum).